A 367-amino-acid polypeptide reads, in one-letter code: Quinolinate synthase (367 aa).

Positions 45 and 62 each coordinate iminosuccinate. Cys109 serves as a coordination point for [4Fe-4S] cluster. Residues 140–142 and Ser161 contribute to the iminosuccinate site; that span reads YVN. Cys229 provides a ligand contact to [4Fe-4S] cluster. Iminosuccinate-binding positions include 255-257 and Thr272; that span reads HPE. [4Fe-4S] cluster is bound at residue Cys319.

This sequence belongs to the quinolinate synthase family. Type 3 subfamily. Requires [4Fe-4S] cluster as cofactor.

It localises to the cytoplasm. The enzyme catalyses iminosuccinate + dihydroxyacetone phosphate = quinolinate + phosphate + 2 H2O + H(+). Its pathway is cofactor biosynthesis; NAD(+) biosynthesis; quinolinate from iminoaspartate: step 1/1. Catalyzes the condensation of iminoaspartate with dihydroxyacetone phosphate to form quinolinate. In Halalkalibacterium halodurans (strain ATCC BAA-125 / DSM 18197 / FERM 7344 / JCM 9153 / C-125) (Bacillus halodurans), this protein is Quinolinate synthase.